The chain runs to 187 residues: 5-formyltetrahydrofolate cyclo-ligase (187 aa).

Residues 6-10, 139-146, and Asp-178 contribute to the ATP site; these read RQQIR and GMGGGFYD.

Belongs to the 5-formyltetrahydrofolate cyclo-ligase family.

The enzyme catalyses (6S)-5-formyl-5,6,7,8-tetrahydrofolate + ATP = (6R)-5,10-methenyltetrahydrofolate + ADP + phosphate. It participates in one-carbon metabolism; tetrahydrofolate interconversion. In terms of biological role, involved in the removal of 5-formyltetrahydrofolate. In vitro, it is a potent inhibitor of various folate-dependent enzymes in the C1 metabolism network and in vivo it might function as a folate storage. 5-formyltetrahydrofolate is also used as an antifolate rescue agent in cancer chemotherapy. Catalyzes the irreversible ATP-dependent transformation of 5-formyltetrahydrofolate (5-CHO-THF) to form 5,10-methenyltetrahydrofolate (5,10-CH=THF). The reverse reaction is catalyzed by the serine hydroxymethyltransferase GlyA (SHMT). The chain is 5-formyltetrahydrofolate cyclo-ligase from Haemophilus influenzae (strain ATCC 51907 / DSM 11121 / KW20 / Rd).